We begin with the raw amino-acid sequence, 153 residues long: Transcriptional repressor NrdR (153 aa).

A zinc finger spans residues 3–34; that stretch reads CPFCGYEDTRVLDSRELSEGRAIRRRRECPQC. Residues 49–139 enclose the ATP-cone domain; that stretch reads ITVIKKDGRR…VYKDFREIDQ (91 aa).

It belongs to the NrdR family. Zn(2+) is required as a cofactor.

Negatively regulates transcription of bacterial ribonucleotide reductase nrd genes and operons by binding to NrdR-boxes. The chain is Transcriptional repressor NrdR from Fervidobacterium nodosum (strain ATCC 35602 / DSM 5306 / Rt17-B1).